Here is a 585-residue protein sequence, read N- to C-terminus: Squalene epoxidase 2, mitochondrial (585 aa).

The N-terminal 45 residues, 1-45, are a transit peptide targeting the mitochondrion; that stretch reads MKPFVIRNLPRFQSTLRSSLLYTNHRPSSRFSLSTRRFTTGATYI. A helical membrane pass occupies residues 70–90; the sequence is AKIALDQFIASLFTFLLLYIL. FAD contacts are provided by residues 132-133, 152-153, Arg-160, Arg-231, Val-247, Asp-409, and Met-422; these read VA and ER. The next 3 membrane-spanning stretches (helical) occupy residues 493–513, 520–540, and 545–565; these read FDYLSLGGVFSSGPVALLSGL, LVLHFFAVAIYAVCRLMLPFP, and FWLGARIISSASSIIFPIIKA.

Belongs to the squalene monooxygenase family. The cofactor is FAD. In terms of tissue distribution, expressed mainly in inflorescences. Detected in seedlings, leaves, stems, and siliques.

The protein resides in the mitochondrion membrane. The enzyme catalyses squalene + reduced [NADPH--hemoprotein reductase] + O2 = (S)-2,3-epoxysqualene + oxidized [NADPH--hemoprotein reductase] + H2O + H(+). Its pathway is terpene metabolism; lanosterol biosynthesis; lanosterol from farnesyl diphosphate: step 2/3. In terms of biological role, catalyzes the stereospecific oxidation of squalene to (S)-2,3-epoxysqualene, and is considered to be a rate-limiting enzyme in steroid biosynthesis. Produces primarily oxidosqualene. The sequence is that of Squalene epoxidase 2, mitochondrial (SQE2) from Arabidopsis thaliana (Mouse-ear cress).